A 72-amino-acid chain; its full sequence is Translation initiation factor IF-1 (72 aa).

The 72-residue stretch at 1–72 folds into the S1-like domain; the sequence is MAKQDVIELE…TRGRITYRYK (72 aa).

Belongs to the IF-1 family. Component of the 30S ribosomal translation pre-initiation complex which assembles on the 30S ribosome in the order IF-2 and IF-3, IF-1 and N-formylmethionyl-tRNA(fMet); mRNA recruitment can occur at any time during PIC assembly.

The protein resides in the cytoplasm. One of the essential components for the initiation of protein synthesis. Stabilizes the binding of IF-2 and IF-3 on the 30S subunit to which N-formylmethionyl-tRNA(fMet) subsequently binds. Helps modulate mRNA selection, yielding the 30S pre-initiation complex (PIC). Upon addition of the 50S ribosomal subunit IF-1, IF-2 and IF-3 are released leaving the mature 70S translation initiation complex. The protein is Translation initiation factor IF-1 of Staphylococcus aureus (strain USA300 / TCH1516).